Consider the following 275-residue polypeptide: 2,3,4,5-tetrahydropyridine-2,6-dicarboxylate N-succinyltransferase (275 aa).

Arg104 and Asp141 together coordinate substrate.

This sequence belongs to the transferase hexapeptide repeat family. Homotrimer.

The protein resides in the cytoplasm. The catalysed reaction is (S)-2,3,4,5-tetrahydrodipicolinate + succinyl-CoA + H2O = (S)-2-succinylamino-6-oxoheptanedioate + CoA. It participates in amino-acid biosynthesis; L-lysine biosynthesis via DAP pathway; LL-2,6-diaminopimelate from (S)-tetrahydrodipicolinate (succinylase route): step 1/3. The polypeptide is 2,3,4,5-tetrahydropyridine-2,6-dicarboxylate N-succinyltransferase (Haemophilus influenzae (strain 86-028NP)).